A 165-amino-acid chain; its full sequence is 2S seed storage protein 5 (165 aa).

The N-terminal stretch at methionine 1–alanine 20 is a signal peptide. Propeptides lie at residues serine 21–asparagine 37 and tyrosine 71–asparagine 89.

Belongs to the 2S seed storage albumins family. The mature protein consists of a small and a large chain linked by disulfide bonds.

Functionally, this is a 2S seed storage protein. This is 2S seed storage protein 5 (SESA5) from Arabidopsis thaliana (Mouse-ear cress).